We begin with the raw amino-acid sequence, 777 residues long: Dynamin-like protein ARC5 (777 aa).

In terms of domain architecture, Dynamin-type G spans 45–343 (PFEAPAVLVV…LWKRYKESVP (299 aa)). Residues 55–62 (GQQTDGKS) form a G1 motif region. 55–62 (GQQTDGKS) is a GTP binding site. The interval 81 to 83 (KTR) is G2 motif. The segment at 160 to 163 (DTPG) is G3 motif. GTP-binding positions include 160-164 (DTPGL) and 231-234 (TKLD). A G4 motif region spans residues 231-234 (TKLD). The G5 motif stretch occupies residues 265 to 268 (SPFF). Coiled-coil stretches lie at residues 300 to 320 (EDIASLEKKLGRLLTKQEKSR) and 728 to 765 (NLRQSLDQKKRSTEIELRRIKRIKEKFRVMNEKLNSHE).

Belongs to the TRAFAC class dynamin-like GTPase superfamily. Dynamin/Fzo/YdjA family. In terms of assembly, forms a homodimer and heterodimers with DRP3A and DRP3B on peroxisomes. Also interacts with FIS1A (but not FIS1B) and PEX11 proteins (PEX11A, PEX11B, PEX11C, PEX11D and PEX11E) on peroxisomes. Interacts with PDV1 and PDV2. In terms of processing, stabilized at the plastid outer envelope membranes (OEMs) in the constriction site when in complex with GTP, but destabilized after conversion of GTP into GDP leading to turnover with a cytosolic pool.

It is found in the cytoplasm. It localises to the plastid. Its subcellular location is the chloroplast outer membrane. The protein localises to the peroxisome. The protein resides in the cytosol. The catalysed reaction is GTP + H2O = GDP + phosphate + H(+). With respect to regulation, GTPase activity is repressed by PDV2 thus increasing stability at the plastid outer envelope membranes (OEMs) periphery. Its function is as follows. Mechanochemical GTPase component of both plastid and peroxisome division machinery. Required for the last steps of plastid division specifically in mesophyll-cell, when the narrow isthmus breaks, facilitating the separation of the daughter plastids. Necessary for peroxisome activities. Seems to influence stromule (stroma-filled tubular extensions of the plastid envelope membrane) length and frequency. The chain is Dynamin-like protein ARC5 from Arabidopsis thaliana (Mouse-ear cress).